Consider the following 448-residue polypeptide: Adenylosuccinate synthetase (448 aa).

GTP contacts are provided by residues 36 to 42 (GDEGKGK) and 64 to 66 (GHT). Asp37 serves as the catalytic Proton acceptor. Residues Asp37 and Gly64 each contribute to the Mg(2+) site. Residues 37–40 (DEGK), 62–65 (NAGH), Thr154, Arg168, Asn246, Thr261, and Arg325 contribute to the IMP site. Residue His65 is the Proton donor of the active site. A substrate-binding site is contributed by 321–327 (VTTKRKR). GTP is bound by residues Arg327, 353 to 355 (KLD), and 436 to 438 (GVG).

This sequence belongs to the adenylosuccinate synthetase family. Homodimer. It depends on Mg(2+) as a cofactor.

It localises to the cytoplasm. The catalysed reaction is IMP + L-aspartate + GTP = N(6)-(1,2-dicarboxyethyl)-AMP + GDP + phosphate + 2 H(+). The protein operates within purine metabolism; AMP biosynthesis via de novo pathway; AMP from IMP: step 1/2. Plays an important role in the de novo pathway and in the salvage pathway of purine nucleotide biosynthesis. Catalyzes the first committed step in the biosynthesis of AMP from IMP. The protein is Adenylosuccinate synthetase of Drosophila ananassae (Fruit fly).